Consider the following 516-residue polypeptide: Anthranilate synthase component 1 (516 aa).

Residues S56 and 283 to 285 contribute to the L-tryptophan site; that span reads PYM. 324 to 325 is a binding site for chorismate; it reads GT. Residue E351 participates in Mg(2+) binding. Chorismate contacts are provided by residues Y439, R459, 473–475, and G475; that span reads GGG. Residue E488 coordinates Mg(2+).

This sequence belongs to the anthranilate synthase component I family. As to quaternary structure, heterotetramer consisting of two non-identical subunits: a beta subunit (TrpG) and a large alpha subunit (TrpE). Mg(2+) is required as a cofactor.

The catalysed reaction is chorismate + L-glutamine = anthranilate + pyruvate + L-glutamate + H(+). It functions in the pathway amino-acid biosynthesis; L-tryptophan biosynthesis; L-tryptophan from chorismate: step 1/5. Its activity is regulated as follows. Feedback inhibited by tryptophan. Its function is as follows. Part of a heterotetrameric complex that catalyzes the two-step biosynthesis of anthranilate, an intermediate in the biosynthesis of L-tryptophan. In the first step, the glutamine-binding beta subunit (TrpG) of anthranilate synthase (AS) provides the glutamine amidotransferase activity which generates ammonia as a substrate that, along with chorismate, is used in the second step, catalyzed by the large alpha subunit of AS (TrpE) to produce anthranilate. In the absence of TrpG, TrpE can synthesize anthranilate directly from chorismate and high concentrations of ammonia. This chain is Anthranilate synthase component 1 (trpE), found in Mycobacterium bovis (strain ATCC BAA-935 / AF2122/97).